Here is a 286-residue protein sequence, read N- to C-terminus: 4-diphosphocytidyl-2-C-methyl-D-erythritol kinase (286 aa).

Lys-10 is an active-site residue. 94 to 104 (PVAAGLAGGSS) serves as a coordination point for ATP. Residue Asp-136 is part of the active site.

This sequence belongs to the GHMP kinase family. IspE subfamily.

The catalysed reaction is 4-CDP-2-C-methyl-D-erythritol + ATP = 4-CDP-2-C-methyl-D-erythritol 2-phosphate + ADP + H(+). It functions in the pathway isoprenoid biosynthesis; isopentenyl diphosphate biosynthesis via DXP pathway; isopentenyl diphosphate from 1-deoxy-D-xylulose 5-phosphate: step 3/6. Catalyzes the phosphorylation of the position 2 hydroxy group of 4-diphosphocytidyl-2C-methyl-D-erythritol. The chain is 4-diphosphocytidyl-2-C-methyl-D-erythritol kinase from Exiguobacterium sibiricum (strain DSM 17290 / CCUG 55495 / CIP 109462 / JCM 13490 / 255-15).